We begin with the raw amino-acid sequence, 66 residues long: U1-theraphotoxin-Cg1a 1 (66 aa).

The signal sequence occupies residues 1-21 (MKTSALFVIFGLVLLFCNSFA). Residues 22–29 (AELKTTGR) constitute a propeptide that is removed on maturation. Intrachain disulfides connect Cys-31-Cys-46, Cys-38-Cys-51, and Cys-45-Cys-58. The residue at position 63 (Pro-63) is a Proline amide.

It belongs to the neurotoxin 10 (Hwtx-1) family. 46 (Jztx-7/10/12) subfamily. As to expression, expressed by the venom gland.

The protein resides in the secreted. In terms of biological role, probable ion channel inhibitor. The protein is U1-theraphotoxin-Cg1a 1 of Chilobrachys guangxiensis (Chinese earth tiger tarantula).